The chain runs to 91 residues: uncharacterized protein (91 aa).

Residues 12–34 traverse the membrane as a helical segment; the sequence is FAIVYANITFLFYYLLDFTLPFH.

It localises to the membrane. This is an uncharacterized protein from Saccharomyces cerevisiae (strain ATCC 204508 / S288c) (Baker's yeast).